We begin with the raw amino-acid sequence, 212 residues long: Interleukin-6 (212 aa).

The N-terminal stretch at 1-27 (MNSVSTSAFGPVAFSLGLLLVLPAAFP) is a signal peptide. C72 and C78 are disulfide-bonded. N73 carries an N-linked (GlcNAc...) asparagine glycan. A Phosphoserine modification is found at S81. The cysteines at positions 101 and 111 are disulfide-linked. A glycan (N-linked (GlcNAc...) asparagine) is linked at N172.

Belongs to the IL-6 superfamily. Component of a hexamer of two molecules each of IL6, IL6R and IL6ST; first binds to IL6R to associate with the signaling subunit IL6ST. Interacts with IL6R (via the N-terminal ectodomain); this interaction may be affected by IL6R-binding with SORL1, hence decreasing IL6 cis signaling. Interacts with SORL1 (via the N-terminal ectodomain); this interaction leads to IL6 internalization and lysosomal degradation. May form a trimeric complex with the soluble SORL1 ectodomain and soluble IL6R receptor; this interaction might stabilize circulating IL6, hence promoting IL6 trans signaling.

The protein localises to the secreted. Cytokine with a wide variety of biological functions in immunity, tissue regeneration, and metabolism. Binds to IL6R, then the complex associates to the signaling subunit IL6ST/gp130 to trigger the intracellular IL6-signaling pathway. The interaction with the membrane-bound IL6R and IL6ST stimulates 'classic signaling', whereas the binding of IL6 and soluble IL6R to IL6ST stimulates 'trans-signaling'. Alternatively, 'cluster signaling' occurs when membrane-bound IL6:IL6R complexes on transmitter cells activate IL6ST receptors on neighboring receiver cells. In terms of biological role, IL6 is a potent inducer of the acute phase response. Rapid production of IL6 contributes to host defense during infection and tissue injury, but excessive IL6 synthesis is involved in disease pathology. In the innate immune response, is synthesized by myeloid cells, such as macrophages and dendritic cells, upon recognition of pathogens through toll-like receptors (TLRs) at the site of infection or tissue injury. In the adaptive immune response, is required for the differentiation of B cells into immunoglobulin-secreting cells. Plays a major role in the differentiation of CD4(+) T cell subsets. Essential factor for the development of T follicular helper (Tfh) cells that are required for the induction of germinal-center formation. Required to drive naive CD4(+) T cells to the Th17 lineage. Also required for proliferation of myeloma cells and the survival of plasmablast cells. Functionally, acts as an essential factor in bone homeostasis and on vessels directly or indirectly by induction of VEGF, resulting in increased angiogenesis activity and vascular permeability. Induces, through 'trans-signaling' and synergistically with IL1B and TNF, the production of VEGF. Involved in metabolic controls, is discharged into the bloodstream after muscle contraction increasing lipolysis and improving insulin resistance. 'Trans-signaling' in central nervous system also regulates energy and glucose homeostasis. Mediates, through GLP-1, crosstalk between insulin-sensitive tissues, intestinal L cells and pancreatic islets to adapt to changes in insulin demand. Also acts as a myokine. Plays a protective role during liver injury, being required for maintenance of tissue regeneration. Also has a pivotal role in iron metabolism by regulating HAMP/hepcidin expression upon inflammation or bacterial infection. Through activation of IL6ST-YAP-NOTCH pathway, induces inflammation-induced epithelial regeneration. This is Interleukin-6 (IL6) from Macaca thibetana (Pere David's macaque).